The chain runs to 610 residues: Elongation factor 4 (610 aa).

The 183-residue stretch at 13–195 folds into the tr-type G domain; sequence SHIRNFSIVA…AIVHKLPAPK (183 aa). Residues 25 to 30 and 142 to 145 each bind GTP; these read DHGKST and NKID.

The protein belongs to the TRAFAC class translation factor GTPase superfamily. Classic translation factor GTPase family. LepA subfamily.

The protein localises to the cell inner membrane. The enzyme catalyses GTP + H2O = GDP + phosphate + H(+). Functionally, required for accurate and efficient protein synthesis under certain stress conditions. May act as a fidelity factor of the translation reaction, by catalyzing a one-codon backward translocation of tRNAs on improperly translocated ribosomes. Back-translocation proceeds from a post-translocation (POST) complex to a pre-translocation (PRE) complex, thus giving elongation factor G a second chance to translocate the tRNAs correctly. Binds to ribosomes in a GTP-dependent manner. In Rhizobium johnstonii (strain DSM 114642 / LMG 32736 / 3841) (Rhizobium leguminosarum bv. viciae), this protein is Elongation factor 4.